Here is a 334-residue protein sequence, read N- to C-terminus: MKFVDSASVRIEAGKGGAGCLGFRRERYISDGGPDGGDGGDGGHVYFQGQDGLNTLSEFCFKRLFRAKNGQPGSGQNKRGKSAQHLTVEIPLGTKVYDLVTDELIGEMTKHEQTILVAKGGFHGLGNTRFKSSINRAPRETTPGFPGEVREIGLELSVMADIGLLGIPNAGKSSLIRQISSARPKIADYPFTTLHPSLSVVSFCDKHIVMADIPGLIENASKGAGLGFKFLKHLSRAKVLLHVVDILPVDGSDPVKNFLTIEKELKKYDQELANKEKLLVINKIDLLPEKDRNTMVQSLLKDICYKGKVFNISALNGLGCKDLVAGLFKLVLRK.

Positions 1 to 159 constitute an Obg domain; that stretch reads MKFVDSASVR…REIGLELSVM (159 aa). The region spanning 160 to 332 is the OBG-type G domain; sequence ADIGLLGIPN…LVAGLFKLVL (173 aa). Residues 166–173, 191–195, 212–215, 282–285, and 313–315 contribute to the GTP site; these read GIPNAGKS, FTTLH, DIPG, NKID, and SAL. Mg(2+) contacts are provided by S173 and T193.

The protein belongs to the TRAFAC class OBG-HflX-like GTPase superfamily. OBG GTPase family. Monomer. It depends on Mg(2+) as a cofactor.

It is found in the cytoplasm. Its function is as follows. An essential GTPase which binds GTP, GDP and possibly (p)ppGpp with moderate affinity, with high nucleotide exchange rates and a fairly low GTP hydrolysis rate. Plays a role in control of the cell cycle, stress response, ribosome biogenesis and in those bacteria that undergo differentiation, in morphogenesis control. The chain is GTPase Obg from Vesicomyosocius okutanii subsp. Calyptogena okutanii (strain HA).